Consider the following 427-residue polypeptide: L-rhamnose isomerase (427 aa).

3 residues coordinate Mn(2+): H264, D296, and D298.

It belongs to the rhamnose isomerase family. It depends on Mn(2+) as a cofactor.

Its subcellular location is the cytoplasm. The enzyme catalyses L-rhamnopyranose = L-rhamnulose. It participates in carbohydrate degradation; L-rhamnose degradation; glycerone phosphate from L-rhamnose: step 1/3. Functionally, catalyzes the interconversion of L-rhamnose and L-rhamnulose. The protein is L-rhamnose isomerase of Rhodopirellula baltica (strain DSM 10527 / NCIMB 13988 / SH1).